A 249-amino-acid chain; its full sequence is Urease accessory protein UreG (249 aa).

A compositionally biased stretch (basic and acidic residues) spans 1–13 (MHLGHEEFQRTDG). Residues 1 to 34 (MHLGHEEFQRTDGRASTGPADAGPAGAGRAPRIG) form a disordered region. Positions 18–33 (GPADAGPAGAGRAPRI) are enriched in low complexity. 37-44 (GPVGSGKT) contributes to the GTP binding site. Residues 229–249 (PRGGSYDASDASNASQPLNRM) form a disordered region. Polar residues predominate over residues 238–249 (DASNASQPLNRM).

This sequence belongs to the SIMIBI class G3E GTPase family. UreG subfamily. As to quaternary structure, homodimer. UreD, UreF and UreG form a complex that acts as a GTP-hydrolysis-dependent molecular chaperone, activating the urease apoprotein by helping to assemble the nickel containing metallocenter of UreC. The UreE protein probably delivers the nickel.

The protein localises to the cytoplasm. Facilitates the functional incorporation of the urease nickel metallocenter. This process requires GTP hydrolysis, probably effectuated by UreG. The chain is Urease accessory protein UreG from Frankia casuarinae (strain DSM 45818 / CECT 9043 / HFP020203 / CcI3).